A 1018-amino-acid polypeptide reads, in one-letter code: Collagen, type I, alpha 1a (1018 aa).

Over residues Gln-1–Ser-10 the composition is skewed to basic and acidic residues. A disordered region spans residues Gln-1–Gln-991. Over residues Met-13–Ser-30 the composition is skewed to pro residues. A compositionally biased stretch (low complexity) spans Pro-31–Arg-58. Residues Asn-67–Glu-81 show a composition bias toward basic and acidic residues. A compositionally biased stretch (low complexity) spans Pro-126–Ala-136. Residues Pro-138 to Pro-151 show a composition bias toward pro residues. Residues Gly-152–Gly-170 show a composition bias toward gly residues. 2 stretches are compositionally biased toward low complexity: residues Pro-171–Pro-214 and Ser-223–Val-261. Gly residues predominate over residues Gly-284 to Gly-296. Composition is skewed to low complexity over residues Val-370–Lys-385, Ala-424–Gln-442, Leu-452–Pro-510, and Arg-543–Thr-558. Gly residues predominate over residues Gly-568–Gly-577. Composition is skewed to low complexity over residues Ala-591 to Thr-627 and Pro-641 to Val-663. The segment covering Pro-665–Pro-677 has biased composition (pro residues). Low complexity-rich tracts occupy residues Glu-701–Gly-746 and Pro-775–Ser-795. A compositionally biased stretch (pro residues) spans Ala-819–Val-829. Over residues Pro-843–Pro-862 the composition is skewed to low complexity. Over residues Arg-865–Glu-876 the composition is skewed to basic and acidic residues. Over residues Ser-889–Pro-925 the composition is skewed to low complexity. The region spanning Gly-932–Lys-1018 is the Fibrillar collagen NC1 domain. Over residues Lys-948–Glu-959 the composition is skewed to basic and acidic residues. Over residues Thr-963–Gln-973 the composition is skewed to polar residues.

The protein belongs to the fibrillar collagen family.

The protein resides in the secreted. It localises to the extracellular space. The protein localises to the extracellular matrix. This Epinephelus costae (Goldblotch grouper) protein is Collagen, type I, alpha 1a.